The chain runs to 181 residues: MESGFKVTLKDAIRTIPDYPKPGVQFRDVTTLMGNAQAFRRAVDELVYPYAGNRIDKVAGIEARGFILGGAIAHQLSAGFVPIRKKGKLPRDTARIAYSLEYGVDEMEMHRDAIEKGERVVLVDDLIATGGTAEAAAKLLLQMGAEIVAACFIIDLPDLGGRKKLEALGLPVRTLVAFEGD.

This sequence belongs to the purine/pyrimidine phosphoribosyltransferase family. As to quaternary structure, homodimer.

The protein localises to the cytoplasm. The enzyme catalyses AMP + diphosphate = 5-phospho-alpha-D-ribose 1-diphosphate + adenine. It participates in purine metabolism; AMP biosynthesis via salvage pathway; AMP from adenine: step 1/1. In terms of biological role, catalyzes a salvage reaction resulting in the formation of AMP, that is energically less costly than de novo synthesis. The sequence is that of Adenine phosphoribosyltransferase from Brucella suis (strain ATCC 23445 / NCTC 10510).